Here is a 135-residue protein sequence, read N- to C-terminus: Putative hydrolase EbsB (135 aa).

An RNase H type-1 domain is found at 1 to 128; the sequence is MLRIYVDAAT…ADMLARQALQ (128 aa). Mg(2+)-binding residues include Asp-7, Glu-45, Asp-71, and Asp-120.

The protein belongs to the RNase H family. EbsB subfamily. The cofactor is Mg(2+).

The protein resides in the secreted. It localises to the cell wall. Its function is as follows. Seems to play some role in the cell surface expression of a chromosomally encoded receptor, named enterococcal binding substance (EBS), that mediates mating aggregate formation. Might interfere with the synthesis or assembly of EBS and function as a cell wall hydrolase. This Enterococcus faecalis (strain ATCC 700802 / V583) protein is Putative hydrolase EbsB.